Reading from the N-terminus, the 228-residue chain is Putative L-ribulose-5-phosphate 4-epimerase UlaF (228 aa).

Residues 26–27, 43–44, and 72–73 each bind substrate; these read GN, SG, and SS. Zn(2+) contacts are provided by D74, H93, and H95. The active-site Proton donor/acceptor is D118. H167 contributes to the Zn(2+) binding site. Y225 functions as the Proton donor/acceptor in the catalytic mechanism.

It belongs to the aldolase class II family. AraD/FucA subfamily. It depends on Zn(2+) as a cofactor.

It carries out the reaction L-ribulose 5-phosphate = D-xylulose 5-phosphate. It participates in cofactor degradation; L-ascorbate degradation; D-xylulose 5-phosphate from L-ascorbate: step 4/4. Catalyzes the isomerization of L-ribulose 5-phosphate to D-xylulose 5-phosphate. Is involved in the anaerobic L-ascorbate utilization. The protein is Putative L-ribulose-5-phosphate 4-epimerase UlaF of Shigella boydii serotype 4 (strain Sb227).